Consider the following 422-residue polypeptide: 3-isopropylmalate dehydratase large subunit (422 aa).

Residues C294, C354, and C357 each coordinate [4Fe-4S] cluster.

Belongs to the aconitase/IPM isomerase family. LeuC type 2 subfamily. Heterodimer of LeuC and LeuD. [4Fe-4S] cluster serves as cofactor.

The enzyme catalyses (2R,3S)-3-isopropylmalate = (2S)-2-isopropylmalate. The protein operates within amino-acid biosynthesis; L-leucine biosynthesis; L-leucine from 3-methyl-2-oxobutanoate: step 2/4. In terms of biological role, catalyzes the isomerization between 2-isopropylmalate and 3-isopropylmalate, via the formation of 2-isopropylmaleate. The polypeptide is 3-isopropylmalate dehydratase large subunit (Mycolicibacterium smegmatis (strain ATCC 700084 / mc(2)155) (Mycobacterium smegmatis)).